The following is a 511-amino-acid chain: Zinc finger CCCH-type with G patch domain-containing protein (511 aa).

The C3H1-type zinc-finger motif lies at Pro-157–Leu-180. Positions Asp-254–Asp-281 are disordered. The span at Ser-271 to Asp-281 shows a compositional bias: acidic residues. The region spanning Thr-311–Glu-357 is the G-patch domain. 2 disordered regions span residues Gly-409–Thr-433 and Met-478–Phe-511. Basic and acidic residues predominate over residues Gln-414–Ala-425. Residues Met-478–Arg-493 are compositionally biased toward polar residues. Over residues Ser-494 to Phe-511 the composition is skewed to basic and acidic residues.

The protein localises to the nucleus. Its function is as follows. Transcription repressor. The protein is Zinc finger CCCH-type with G patch domain-containing protein of Drosophila ananassae (Fruit fly).